A 256-amino-acid polypeptide reads, in one-letter code: Imidazole glycerol phosphate synthase subunit HisF (256 aa).

Residues Asp12 and Asp131 contribute to the active site.

It belongs to the HisA/HisF family. In terms of assembly, heterodimer of HisH and HisF.

Its subcellular location is the cytoplasm. The catalysed reaction is 5-[(5-phospho-1-deoxy-D-ribulos-1-ylimino)methylamino]-1-(5-phospho-beta-D-ribosyl)imidazole-4-carboxamide + L-glutamine = D-erythro-1-(imidazol-4-yl)glycerol 3-phosphate + 5-amino-1-(5-phospho-beta-D-ribosyl)imidazole-4-carboxamide + L-glutamate + H(+). Its pathway is amino-acid biosynthesis; L-histidine biosynthesis; L-histidine from 5-phospho-alpha-D-ribose 1-diphosphate: step 5/9. IGPS catalyzes the conversion of PRFAR and glutamine to IGP, AICAR and glutamate. The HisF subunit catalyzes the cyclization activity that produces IGP and AICAR from PRFAR using the ammonia provided by the HisH subunit. The sequence is that of Imidazole glycerol phosphate synthase subunit HisF from Bifidobacterium longum (strain NCC 2705).